Consider the following 165-residue polypeptide: Small histone ubiquitination factor 1 (165 aa).

Residues 1–17 (MSSRRNDYHYDGNDHQY) are compositionally biased toward basic and acidic residues. The disordered stretch occupies residues 1-86 (MSSRRNDYHY…STRASFGAAS (86 aa)). 2 stretches are compositionally biased toward low complexity: residues 29–38 (SFYESSYRSR) and 50–60 (SSYDSPSSSTN). Positions 73-86 (PSNNSTRASFGAAS) are enriched in polar residues.

Component of the histone H2B ubiquitin ligase complex (HULC) composed of at least brl1, brl2, rhp6 and shf1.

The protein localises to the nucleus. It is found in the cytoplasm. The protein resides in the cytoskeleton. It localises to the microtubule organizing center. Its subcellular location is the spindle pole body. Component of the histone H2B ubiquitin ligase complex (HULC) which plays a role in transcription regulation by catalyzing the monoubiquitination of histone H2B to form H2BK123ub1. H2BK123ub1 gives a specific tag for epigenetic transcriptional activation and is also a prerequisite for H3K4me and H3K79me formation. The protein is Small histone ubiquitination factor 1 (shf1) of Schizosaccharomyces pombe (strain 972 / ATCC 24843) (Fission yeast).